Reading from the N-terminus, the 357-residue chain is Probable dual-specificity RNA methyltransferase RlmN (357 aa).

The active-site Proton acceptor is the glutamate 92. A Radical SAM core domain is found at 98 to 336 (HKYGLSVCVT…CGVRLEHGTD (239 aa)). Cysteines 105 and 341 form a disulfide. The [4Fe-4S] cluster site is built by cysteine 112, cysteine 116, and cysteine 119. S-adenosyl-L-methionine-binding positions include 164-165 (GE), serine 196, 219-221 (SLH), and asparagine 297. Cysteine 341 serves as the catalytic S-methylcysteine intermediate.

Belongs to the radical SAM superfamily. RlmN family. The cofactor is [4Fe-4S] cluster.

Its subcellular location is the cytoplasm. The enzyme catalyses adenosine(2503) in 23S rRNA + 2 reduced [2Fe-2S]-[ferredoxin] + 2 S-adenosyl-L-methionine = 2-methyladenosine(2503) in 23S rRNA + 5'-deoxyadenosine + L-methionine + 2 oxidized [2Fe-2S]-[ferredoxin] + S-adenosyl-L-homocysteine. It carries out the reaction adenosine(37) in tRNA + 2 reduced [2Fe-2S]-[ferredoxin] + 2 S-adenosyl-L-methionine = 2-methyladenosine(37) in tRNA + 5'-deoxyadenosine + L-methionine + 2 oxidized [2Fe-2S]-[ferredoxin] + S-adenosyl-L-homocysteine. Its function is as follows. Specifically methylates position 2 of adenine 2503 in 23S rRNA and position 2 of adenine 37 in tRNAs. The protein is Probable dual-specificity RNA methyltransferase RlmN of Exiguobacterium sibiricum (strain DSM 17290 / CCUG 55495 / CIP 109462 / JCM 13490 / 255-15).